The primary structure comprises 196 residues: ATP-dependent Clp protease proteolytic subunit (196 aa).

The active-site Nucleophile is Ser-99. His-124 is an active-site residue.

It belongs to the peptidase S14 family. As to quaternary structure, fourteen ClpP subunits assemble into 2 heptameric rings which stack back to back to give a disk-like structure with a central cavity, resembling the structure of eukaryotic proteasomes.

The protein resides in the cytoplasm. It catalyses the reaction Hydrolysis of proteins to small peptides in the presence of ATP and magnesium. alpha-casein is the usual test substrate. In the absence of ATP, only oligopeptides shorter than five residues are hydrolyzed (such as succinyl-Leu-Tyr-|-NHMec, and Leu-Tyr-Leu-|-Tyr-Trp, in which cleavage of the -Tyr-|-Leu- and -Tyr-|-Trp bonds also occurs).. Functionally, cleaves peptides in various proteins in a process that requires ATP hydrolysis. Has a chymotrypsin-like activity. Plays a major role in the degradation of misfolded proteins. In Campylobacter lari (strain RM2100 / D67 / ATCC BAA-1060), this protein is ATP-dependent Clp protease proteolytic subunit.